Reading from the N-terminus, the 7094-residue chain is Replicase polyprotein 1ab (7094 aa).

Residues 54–196 (PENHVMVDCR…PWVMYLRKCG (143 aa)) form the CoV Nsp1 globular domain. Positions 216–246 (FKVEDAYDLVHDEPKGKFSKKAYALIRGYRG) constitute a BetaCoV Nsp1 C-terminal domain. A CoV Nsp2 N-terminal domain is found at 250–519 (LLYVDQYGCD…LICKALYLDY (270 aa)). 4 residues coordinate Zn(2+): Cys-392, Cys-397, Cys-413, and Cys-416. Residues 392–416 (CEQDLCDFKGWVPGNMIDGFACTTC) form a C4 region. The 190-residue stretch at 524–713 (CGNLHQRELL…AQAFRSVAKV (190 aa)) folds into the CoV Nsp2 middle domain. Positions 733–851 (RRRICLSGSK…LDQAWRVPCA (119 aa)) constitute a CoV Nsp2 C-terminal domain. One can recognise a Ubiquitin-like 1 domain in the interval 853–966 (RCVTFKEQPT…LYCAFTAPED (114 aa)). Positions 972–986 (ESGVEEDDVEGEETD) are enriched in acidic residues. The disordered stretch occupies residues 972–992 (ESGVEEDDVEGEETDLTVTSA). The 239-residue stretch at 1036–1274 (DLESVIQDYE…IAQLYGSCIT (239 aa)) folds into the Peptidase C16 1 domain. Cys-1074 functions as the For PL1-PRO activity in the catalytic mechanism. Residues Cys-1151, Cys-1154, Cys-1177, and Cys-1179 each coordinate Zn(2+). A C4-type 1 zinc finger spans residues 1151–1179 (CIKCDLALKLKGLDAMFFYGDVVSHVCKC). Active-site for PL1-PRO activity residues include His-1225 and Asp-1236. A Macro domain is found at 1275–1435 (PNVCFVKGDI…LISKCQITAV (161 aa)). The DPUP domain maps to 1491 to 1563 (DDARTFVQSN…VAQIKALFLD (73 aa)). The 56-residue stretch at 1562 to 1617 (LDKVDILLTVDGVNFTNRFVPVGESFGKSLGNVFCDGVNVTKHKCDINYKGKVFFQ) folds into the Ubiquitin-like 2 domain. The region spanning 1631-1892 (SSFNFDQKEL…KIEYKPDLSQ (262 aa)) is the Peptidase C16 2 domain. The For PL2-PRO activity role is filled by Cys-1671. Zn(2+) contacts are provided by Cys-1749, Cys-1751, Cys-1783, and Cys-1785. A C4-type 2 zinc finger spans residues 1749 to 1785 (CKCGVKQEQRTGVDAVMHFGTLSREDLEIGYTVDCSC). Residues His-1828 and Asp-1842 each act as for PL2-PRO activity in the active site. Residues 1906 to 2007 (IKAQFKTFEK…TYFNRPLLVD (102 aa)) form the Nucleic acid-binding domain. A G2M domain is found at 2020-2169 (DDGGDISESD…ADNKVIYTTE (150 aa)). Helical transmembrane passes span 2138 to 2158 (ISAC…WIKI), 2199 to 2219 (ACII…NVIF), and 2221 to 2241 (DFYL…AQWI). Positions 2138–2385 (ISACFNFIKW…ASFIKLFSLF (248 aa)) are HD1. In terms of domain architecture, 3Ecto spans 2235 to 2296 (GKIAQWIKNT…AIDVVQYEAD (62 aa)). 2 disulfide bridges follow: Cys-2251/Cys-2275 and Cys-2266/Cys-2272. 3 helical membrane passes run 2313–2333 (LIVS…LISI), 2343–2363 (LFML…ANML), and 2365–2385 (AHVF…FSLF). The interval 2383 to 2473 (SLFRHVAYGC…ELKRPIQPTD (91 aa)) is Y1. In terms of domain architecture, CoV Nsp3 Y spans 2383-2750 (SLFRHVAYGC…LTTPFSLKGG (368 aa)). The Zn(2+) site is built by His-2387, Cys-2392, Cys-2397, Cys-2400, Cys-2433, His-2436, Cys-2440, and Cys-2443. The interval 2387–2400 (HVAYGCSKSGCLFC) is ZF1. Positions 2433-2443 (CSKHQWNCIDC) are ZF2. Residues 2474-2566 (VAYHTVTDVK…MVDKNLITTA (93 aa)) are Y2. The interval 2474-2750 (VAYHTVTDVK…LTTPFSLKGG (277 aa)) is coV-Y. The segment at 2567–2649 (NTGTSVTETM…DSVMSAVSAG (83 aa)) is Y3. The tract at residues 2650-2750 (LELTDESCNN…LTTPFSLKGG (101 aa)) is Y4. A run of 5 helical transmembrane segments spans residues 2752–2772 (VFSY…IGLW), 3031–3051 (ASSI…YYLI), 3063–3083 (IVFV…VFQV), 3090–3110 (VYAI…SVIM), and 3115–3135 (LVMY…SVVV). Positions 2752–3135 (VFSYFVYVCF…FCLLYISVVV (384 aa)) are HD2. Residues 3149–3246 (LGTSVRSDGT…TASVSTSFLQ (98 aa)) form the Nsp4C domain. Residues 3247–3549 (SGIVKMVNPT…YQQLAGIKLQ (303 aa)) enclose the Peptidase C30 domain. Catalysis depends on for 3CL-PRO activity residues His-3287 and Cys-3391. 7 helical membrane passes run 3558-3578 (GIVC…TAFV), 3588-3608 (TNML…MLLV), 3615-3635 (LTMY…LVVY), 3657-3677 (TYTD…FVTL), 3684-3704 (LFSF…WYMG), 3711-3731 (ILLM…LSMA), and 3755-3775 (IVLV…GLFS). Residues 3558 to 3775 (GIVCWIMAST…IISCYWGLFS (218 aa)) form an HD3 region. One can recognise a RdRp Nsp7 cofactor domain in the interval 3837–3925 (SKLTDVKCAN…DYAKDNTVLQ (89 aa)). In terms of domain architecture, RdRp Nsp8 cofactor spans 3926 to 4122 (ALQSEFVNMA…HNEVSATALQ (197 aa)). A Nsp9 ssRNA-binding domain is found at 4123 to 4232 (NNELMPAKLK…GTISSTVRLQ (110 aa)). In terms of domain architecture, ExoN/MTase coactivator spans 4233-4370 (AGTATEYASN…CVSTDTTVQS (138 aa)). Residues Cys-4306, Cys-4309, His-4315, Cys-4322, Cys-4348, Cys-4351, Cys-4359, and Cys-4361 each contribute to the Zn(2+) site. Zinc fingers lie at residues 4306–4322 (CIYC…DGLC) and 4348–4361 (CQVC…SCSC). A NiRAN domain is found at 4375–4630 (FLNRVRGTSV…DCELYVNNAY (256 aa)). Residues Asn-4578 and Asp-4587 each coordinate Mn(2+). One can recognise a Nsp12 Interface domain in the interval 4631–4729 (RLFDLVQYDF…MNMDVDTHRY (99 aa)). Residues His-4660, Cys-4666, Cys-4671, Cys-4675, and Cys-4852 each coordinate Zn(2+). In terms of domain architecture, Nsp12 RNA-dependent RNA polymerase spans 4730-5297 (RLSLKDLLLY…NMYLRSAVMQ (568 aa)). Residues 4732–4946 (SLKDLLLYAA…HQKCLKSIAA (215 aa)) are rdRp Fingers N-ter. The tract at residues 4947–4985 (TRGVPVVIGTTKFYGGWDDMLRRLIKDVDNPVLMGWDYP) is rdRp Palm N-ter. In terms of domain architecture, RdRp catalytic spans 4977–5139 (PVLMGWDYPK…CYNSDYASKG (163 aa)). The tract at residues 4986–5044 (KCDRAMPNILRIVSSLVLARKHEACCSQSDRFYRLANEYAQVLSEIVMCGGCYYVKPGG) is rdRp Fingers C-ter. Zn(2+)-binding residues include His-5007, Cys-5010, and Cys-5011. Residues 5045-5180 (TSSGDATTAF…NNGPHEFCSQ (136 aa)) form a rdRp Palm C-ter region. Active-site residues include Ser-5124, Asp-5125, and Asp-5126. The segment at 5181–5297 (HTMLVKMDGD…NMYLRSAVMQ (117 aa)) is rdRp Thumb. Residues 5298 to 5410 (SVGACVVCSS…DDFNRIASCK (113 aa)) enclose the CV ZBD domain. 12 residues coordinate Zn(2+): Cys-5302, Cys-5305, Cys-5313, Cys-5316, Cys-5323, Cys-5326, His-5330, His-5336, Cys-5347, Cys-5352, Cys-5369, and His-5372. The (+)RNA virus helicase ATP-binding domain maps to 5553–5734 (SVLETFQNNV…MCCLGPDIFL (182 aa)). Residue 5578–5585 (GPPGTGKS) participates in ATP binding. Positions 5735-5904 (GTCYRCPKEI…VETRVQCSTN (170 aa)) constitute a (+)RNA virus helicase C-terminal domain. Residues 5971–6186 (LFITKEEAVK…RCLAVYDCFC (216 aa)) form the ExoN domain. Residues Asp-5989, Glu-5991, and Glu-6090 contribute to the active site. Zn(2+) is bound by residues Cys-6106, Cys-6109, Cys-6125, His-6128, His-6156, Cys-6160, and His-6163. Catalysis depends on residues His-6167 and Asp-6172. Cys-6178 contacts Zn(2+). The N7-MTase domain maps to 6195-6421 (YPIISNELSI…NLWNTFTKLQ (227 aa)). 6230–6236 (DIGNPKA) is an S-adenosyl-L-methionine binding site. The segment at 6308 to 6322 (CNGGSLYVNKHAFHT) is gpppA-binding. Positions 6346, 6367, 6378, and 6381 each coordinate Zn(2+). One can recognise a Nsp15 N-terminal oligomerization domain in the interval 6422-6482 (SLENVVYNLV…NVAVELFAKR (61 aa)). The region spanning 6483 to 6603 (SIRHHPELKL…FAVRKEGQDV (121 aa)) is the AV-Nsp11N/CoV-Nsp15M domain. Positions 6653–6792 (TCRTDMEKDF…NDEKVMTFYL (140 aa)) constitute a NendoU domain. Residues His-6683, His-6698, Lys-6738, Lys-6841, Asp-6925, Lys-6965, and Glu-6998 contribute to the active site. In terms of domain architecture, Nidovirus-type SAM-dependent 2'-O-MTase spans 6797–7091 (ASDWKPGYSM…KEVFVGDSMV (295 aa)).

The protein belongs to the coronaviruses polyprotein 1ab family. Interacts with host PHB and PHB2. In terms of assembly, interacts with papain-like protease nsp3 and non-structural protein 6. As to quaternary structure, monomer. Homodimer. Only the homodimer shows catalytic activity. Interacts with nsp8 and nsp12 to form the replication-transcription complex (RTC): nsp12, nsp7, two subunits of nsp8, and up to two subunits of nsp13. In terms of assembly, interacts with nsp7, nsp13 and nsp12 to form the replication-transcription complex (RTC): nsp12, nsp7, two subunits of nsp8, and up to two subunits of nsp13. As to quaternary structure, interacts with nsp12. Interacts with proofreading exoribonuclease nsp14 and 2'-O-methyltransferase nsp16; these interactions enhance nsp14 and nsp16 enzymatic activities. In terms of assembly, interacts with nsp7 and nsp8 to form the replication-transcription complex (RTC): nsp12, nsp7, two subunits of nsp8, and up to two subunits of nsp13. Interacts with nsp9. As to quaternary structure, interacts with nsp8 to form the replication-transcription complex (RTC): nsp12, nsp7, two subunits of nsp8, and up to two subunits of nsp13. Requires Mn(2+) as cofactor. The cofactor is Mg(2+). Post-translationally, specific enzymatic cleavages in vivo by its own proteases yield mature proteins. 3CL-PRO and PL-PRO proteinases are autocatalytically processed.

Its subcellular location is the host membrane. The protein localises to the host cytoplasm. It is found in the host perinuclear region. It localises to the host endoplasmic reticulum-Golgi intermediate compartment. The catalysed reaction is RNA(n) + a ribonucleoside 5'-triphosphate = RNA(n+1) + diphosphate. It catalyses the reaction ATP + H2O = ADP + phosphate + H(+). The enzyme catalyses Thiol-dependent hydrolysis of ester, thioester, amide, peptide and isopeptide bonds formed by the C-terminal Gly of ubiquitin (a 76-residue protein attached to proteins as an intracellular targeting signal).. It carries out the reaction a 5'-end (N(7)-methyl 5'-triphosphoguanosine)-ribonucleoside in mRNA + S-adenosyl-L-methionine = a 5'-end (N(7)-methyl 5'-triphosphoguanosine)-(2'-O-methyl-ribonucleoside) in mRNA + S-adenosyl-L-homocysteine + H(+). The catalysed reaction is uridylyl-uridylyl-ribonucleotide-RNA = a 3'-end uridylyl-2',3'-cyclophospho-uridine-RNA + a 5'-end dephospho-ribonucleoside-RNA. It catalyses the reaction a 5'-end diphospho-ribonucleoside in mRNA + GTP + H(+) = a 5'-end (5'-triphosphoguanosine)-ribonucleoside in mRNA + diphosphate. The enzyme catalyses a 5'-end (5'-triphosphoguanosine)-ribonucleoside in mRNA + S-adenosyl-L-methionine = a 5'-end (N(7)-methyl 5'-triphosphoguanosine)-ribonucleoside in mRNA + S-adenosyl-L-homocysteine. Its function is as follows. The replicase polyprotein of coronaviruses is a multifunctional protein: it contains the activities necessary for the transcription of negative stranded RNA, leader RNA, subgenomic mRNAs and progeny virion RNA as well as proteinases responsible for the cleavage of the polyprotein into functional products. Functionally, inhibits host translation by interacting with the 40S ribosomal subunit. The nsp1-40S ribosome complex further induces an endonucleolytic cleavage near the 5'UTR of host mRNAs, targeting them for degradation. Viral mRNAs are not susceptible to nsp1-mediated endonucleolytic RNA cleavage thanks to the presence of a 5'-end leader sequence and are therefore protected from degradation. By suppressing host gene expression, nsp1 facilitates efficient viral gene expression in infected cells and evasion from host immune response. May play a role in the modulation of host cell survival signaling pathway by interacting with host PHB and PHB2. Indeed, these two proteins play a role in maintaining the functional integrity of the mitochondria and protecting cells from various stresses. In terms of biological role, responsible for the cleavages located at the N-terminus of the replicase polyprotein. In addition, PL-PRO possesses a deubiquitinating/deISGylating activity and processes both 'Lys-48'- and 'Lys-63'-linked polyubiquitin chains from cellular substrates. Participates together with nsp4 in the assembly of virally-induced cytoplasmic double-membrane vesicles necessary for viral replication. Antagonizes innate immune induction of type I interferon by blocking the phosphorylation, dimerization and subsequent nuclear translocation of host IRF3. Also prevents host NF-kappa-B signaling. Its function is as follows. Participates in the assembly of virally-induced cytoplasmic double-membrane vesicles necessary for viral replication. Functionally, cleaves the C-terminus of replicase polyprotein at 11 sites. Recognizes substrates containing the core sequence [ILMVF]-Q-|-[SGACN]. Also able to bind an ADP-ribose-1''-phosphate (ADRP). Plays a role in the initial induction of autophagosomes from host endoplasmic reticulum. Later, limits the expansion of these phagosomes that are no longer able to deliver viral components to lysosomes. In terms of biological role, forms a hexadecamer with nsp8 (8 subunits of each) that may participate in viral replication by acting as a primase. Alternatively, may synthesize substantially longer products than oligonucleotide primers. Its function is as follows. Forms a hexadecamer with nsp7 (8 subunits of each) that may participate in viral replication by acting as a primase. Alternatively, may synthesize substantially longer products than oligonucleotide primers. Functionally, forms a primer, NSP9-pU, which is utilized by the polymerase for the initiation of RNA chains. Interacts with ribosome signal recognition particle RNA (SRP). Together with NSP8, suppress protein integration into the cell membrane, thereby disrupting host immune defenses. Plays a pivotal role in viral transcription by stimulating both nsp14 3'-5' exoribonuclease and nsp16 2'-O-methyltransferase activities. Therefore plays an essential role in viral mRNAs cap methylation. In terms of biological role, RNA-directed RNA polymerase that catalyzes the transcription of viral genomic and subgenomic RNAs. Acts in complex with nsp7 and nsp8 to transcribe both the minus and positive strands of genomic RNA. The kinase-like NiRAN domain of NSP12 attaches one or more nucleotides to the amino terminus of NSP9, forming a covalent RNA-protein intermediate that serves as transcription/replication primer. Subgenomic RNAs (sgRNAs) are formed by discontinuous transcription: The polymerase has the ability to pause at transcription-regulating sequences (TRS) and jump to the leader TRS, resulting in a major deletion. This creates a series of subgenomic RNAs that are replicated, transcribed and translated. In addition, Nsp12 is a subunit of the viral RNA capping enzyme that catalyzes the RNA guanylyltransferase reaction for genomic and sub-genomic RNAs. Subsequently, the NiRAN domain transfers RNA to GDP, and forms the core cap structure GpppA-RNA. Its function is as follows. Multi-functional protein with a zinc-binding domain in N-terminus displaying RNA and DNA duplex-unwinding activities with 5' to 3' polarity. Activity of helicase is dependent on magnesium. Functionally, plays a role in viral RNA synthesis through two distinct activities. The N7-guanine methyltransferase activity plays a role in the formation of the cap structure GpppA-RNA. The proofreading exoribonuclease reduces the sensitivity of the virus to RNA mutagens during replication. This activity acts on both ssRNA and dsRNA in a 3'-5' direction. Plays a role in viral transcription/replication and prevents the simultaneous activation of host cell dsRNA sensors, such as MDA5/IFIH1, OAS, and PKR. Acts by degrading the 5'-polyuridines generated during replication of the poly(A) region of viral genomic and subgenomic RNAs. Catalyzes a two-step reaction in which a 2'3'-cyclic phosphate (2'3'-cP) is first generated by 2'-O transesterification, which is then hydrolyzed to a 3'-phosphate (3'-P). If not degraded, poly(U) RNA would hybridize with poly(A) RNA tails and activate host dsRNA sensors. In terms of biological role, methyltransferase that mediates mRNA cap 2'-O-ribose methylation to the 5'-cap structure of viral mRNAs. N7-methyl guanosine cap is a prerequisite for binding of nsp16. Therefore plays an essential role in viral mRNAs cap methylation which is essential to evade immune system. This chain is Replicase polyprotein 1ab (rep), found in Bos taurus (Bovine).